The sequence spans 209 residues: Mediator of RNA polymerase II transcription subunit 20 (209 aa).

This sequence belongs to the Mediator complex subunit 20 family. In terms of assembly, component of the Mediator complex.

Its subcellular location is the nucleus. In terms of biological role, component of the Mediator complex, a coactivator involved in the regulated transcription of nearly all RNA polymerase II-dependent genes. Mediator functions as a bridge to convey information from gene-specific regulatory proteins to the basal RNA polymerase II transcription machinery. Mediator is recruited to promoters by direct interactions with regulatory proteins and serves as a scaffold for the assembly of a functional preinitiation complex with RNA polymerase II and the general transcription factors. The chain is Mediator of RNA polymerase II transcription subunit 20 (SRB2) from Eremothecium gossypii (strain ATCC 10895 / CBS 109.51 / FGSC 9923 / NRRL Y-1056) (Yeast).